Consider the following 156-residue polypeptide: Cyclic pyranopterin monophosphate synthase (156 aa).

Residues 73-75 and 110-111 each bind substrate; these read LCH and ME. The active site involves aspartate 125.

It belongs to the MoaC family. In terms of assembly, homohexamer; trimer of dimers.

The enzyme catalyses (8S)-3',8-cyclo-7,8-dihydroguanosine 5'-triphosphate = cyclic pyranopterin phosphate + diphosphate. It participates in cofactor biosynthesis; molybdopterin biosynthesis. Its function is as follows. Catalyzes the conversion of (8S)-3',8-cyclo-7,8-dihydroguanosine 5'-triphosphate to cyclic pyranopterin monophosphate (cPMP). In Pseudomonas entomophila (strain L48), this protein is Cyclic pyranopterin monophosphate synthase.